A 229-amino-acid chain; its full sequence is C-&gt;U-editing enzyme APOBEC-1 (229 aa).

One can recognise a CMP/dCMP-type deaminase domain in the interval 10–134 (VDPTLRRRIE…QRNRQGLRDL (125 aa)). H61 lines the Zn(2+) pocket. The active-site Proton donor is E63. Zn(2+)-binding residues include C93 and C96.

Belongs to the cytidine and deoxycytidylate deaminase family. Homodimer. Interacts with A1CF; form an mRNA editing complex. Interacts with RBM47; form an mRNA editing complex. Found in a complex with CELF2/CUGBP2 and A1CF. Interacts with HNRPAB. Interacts with SYNCRIP. It depends on Zn(2+) as a cofactor. As to expression, expressed in the spleen. Expressed at lower level in the kidney, testis, lung, brain and liver.

The protein resides in the cytoplasm. It is found in the nucleus. It carries out the reaction a cytidine in mRNA + H2O + H(+) = a uridine in mRNA + NH4(+). It catalyses the reaction cytidine(6666) in apoB mRNA + H2O + H(+) = uridine(6666) in apoB mRNA + NH4(+). Functionally, cytidine deaminase catalyzing the cytidine to uridine postranscriptional editing of a variety of mRNAs. Form complexes with cofactors that confer differential editing activity and selectivity. Responsible for the postranscriptional editing of a CAA codon for Gln to a UAA codon for stop in the apolipoprotein B mRNA. Also involved in CGA (Arg) to UGA (Stop) editing in the NF1 mRNA. May also play a role in the epigenetic regulation of gene expression by participating in DNA demethylation. The chain is C-&gt;U-editing enzyme APOBEC-1 from Mus musculus (Mouse).